A 462-amino-acid polypeptide reads, in one-letter code: Acetyl-CoA decarbonylase/synthase complex subunit gamma (462 aa).

The region spanning 1–60 is the 4Fe-4S domain; the sequence is MAQLSAMDVYNLLPKANCGACGCKTCMEFATKLVNREAKPEDCPKLDDESLEKLQELLAP. [4Fe-4S] cluster is bound by residues cysteine 18, cysteine 21, cysteine 26, and cysteine 43.

As to quaternary structure, heterodimer of delta and gamma chains. The ACDS complex is made up of alpha, epsilon, beta, gamma and delta chains with a probable stoichiometry of (alpha(2)epsilon(2))(4)-beta(8)-(gamma(1)delta(1))(8). It depends on corrinoid as a cofactor. Requires [4Fe-4S] cluster as cofactor.

The catalysed reaction is 5,6,7,8-tetrahydrosarcinapterin + methyl-Co(III)-[corrinoid Fe-S protein] = 5-methyltetrahydrosarcinapterin + Co(I)-[corrinoid Fe-S protein] + H(+). Functionally, part of a complex that catalyzes the reversible cleavage of acetyl-CoA, allowing autotrophic growth from CO(2). The chain is Acetyl-CoA decarbonylase/synthase complex subunit gamma from Methanopyrus kandleri (strain AV19 / DSM 6324 / JCM 9639 / NBRC 100938).